The following is a 173-amino-acid chain: T cell receptor gamma constant 1 (173 aa).

One can recognise an Ig-like domain in the interval 10–104 (PKPTIFLPSI…NKNGVDQEII (95 aa)). Cysteine 32 and cysteine 88 are joined by a disulfide. 4 N-linked (GlcNAc...) asparagine glycosylation sites follow: asparagine 66, asparagine 120, asparagine 126, and asparagine 135. Residues 139 to 161 (YYMYLLLLLKSVVYFAIITCCLL) form a helical membrane-spanning segment.

Gamma-delta TR is a heterodimer composed of a gamma and delta chain; disulfide-linked. The gamma-delta TR is associated with the transmembrane signaling CD3 coreceptor proteins following the stoichiometry: a single gamma-delta TR heterodimer associates with one CD3D-CD3E heterodimer, one CD3G-CD3E heterodimer and one CD247 homodimer forming a stable octameric structure. Upon activation, gamma-delta TR complex associates with FCER1G to initiate intracellular signaling.

The protein resides in the cell membrane. Constant region of T cell receptor (TR) gamma chain that participates in the antigen recognition. Gamma-delta TRs recognize a variety of self and foreign non-peptide antigens frequently expressed at the epithelial boundaries between the host and external environment, including endogenous lipids presented by MH-like protein CD1D and phosphoantigens presented by butyrophilin-like molecule BTN3A1. Upon antigen recognition induces rapid, innate-like immune responses involved in pathogen clearance and tissue repair. Binding of gamma-delta TR complex to antigen triggers phosphorylation of immunoreceptor tyrosine-based activation motifs (ITAMs) in the CD3 chains by the LCK and FYN kinases, allowing the recruitment, phosphorylation, and activation of ZAP70 that facilitates phosphorylation of the scaffolding proteins LCP2 and LAT. This lead to the formation of a supramolecular signalosome that recruits the phospholipase PLCG1, resulting in calcium mobilization and ERK activation, ultimately leading to T cell expansion and differentiation into effector cells. Gamma-delta TRs are produced through somatic rearrangement of a limited repertoire of variable (V), diversity (D), and joining (J) genes. The potential diversity of gamma-delta TRs is conferred by the unique ability to rearrange (D) genes in tandem and to utilize all three reading frames. The combinatorial diversity is considerably increased by the sequence exonuclease trimming and random nucleotide (N) region additions which occur during the V-(D)-J rearrangements. The sequence is that of T cell receptor gamma constant 1 from Homo sapiens (Human).